Reading from the N-terminus, the 273-residue chain is Shikimate dehydrogenase (NADP(+)) (273 aa).

Shikimate contacts are provided by residues 14-16 and Thr-61; that span reads SKS. Lys-65 (proton acceptor) is an active-site residue. Glu-77 is a binding site for NADP(+). The shikimate site is built by Asn-86 and Asp-102. NADP(+) contacts are provided by residues 126–130, 150–155, and Met-213; these read GAGGA and NRTYEK. Tyr-215 provides a ligand contact to shikimate. Gly-237 contacts NADP(+).

This sequence belongs to the shikimate dehydrogenase family. In terms of assembly, homodimer.

The enzyme catalyses shikimate + NADP(+) = 3-dehydroshikimate + NADPH + H(+). Its pathway is metabolic intermediate biosynthesis; chorismate biosynthesis; chorismate from D-erythrose 4-phosphate and phosphoenolpyruvate: step 4/7. Its function is as follows. Involved in the biosynthesis of the chorismate, which leads to the biosynthesis of aromatic amino acids. Catalyzes the reversible NADPH linked reduction of 3-dehydroshikimate (DHSA) to yield shikimate (SA). The chain is Shikimate dehydrogenase (NADP(+)) from Aliivibrio fischeri (strain MJ11) (Vibrio fischeri).